We begin with the raw amino-acid sequence, 219 residues long: Inner membrane protein YccA (219 aa).

Topologically, residues 1–22 (MDRIVSSSHDRTSLLSTHKVLR) are periplasmic. The next 2 helical transmembrane spans lie at 23 to 43 (NTYF…TAST) and 44 to 64 (VLML…GLMF). Residues 65 to 73 (LTYKTANKP) are Periplasmic-facing. The chain crosses the membrane as a helical span at residues 74–94 (TGIISAFAFTGFLGYILGPIL). Residues 95–104 (NTYLSAGMGD) are Cytoplasmic-facing. The chain crosses the membrane as a helical span at residues 105-125 (VIAMALGGTALVFFCCSAYVL). The Periplasmic portion of the chain corresponds to 126 to 133 (TTRKDMSF). The chain crosses the membrane as a helical span at residues 134–154 (LGGMLMAGIVVVLIGMVANIF). At 155-157 (LQL) the chain is on the cytoplasmic side. The helical transmembrane segment at 158-178 (PALHLAISAVFILISSGAILF) threads the bilayer. The Periplasmic segment spans residues 179–195 (ETSNIIHGGETNYIRAT). A helical membrane pass occupies residues 196–216 (VSLYVSLYNIFVSLLSILGFA). Residues 217-219 (SRD) lie on the Cytoplasmic side of the membrane.

The protein belongs to the BI1 family.

Its subcellular location is the cell inner membrane. The sequence is that of Inner membrane protein YccA (yccA) from Escherichia coli O6:H1 (strain CFT073 / ATCC 700928 / UPEC).